A 67-amino-acid polypeptide reads, in one-letter code: Histone H2A (67 aa).

N5-methylglutamine is present on Q60.

Belongs to the histone H2A family. The nucleosome is a histone octamer containing two molecules each of H2A, H2B, H3 and H4 assembled in one H3-H4 heterotetramer and two H2A-H2B heterodimers. The octamer wraps approximately 147 bp of DNA.

The protein localises to the nucleus. It is found in the chromosome. Functionally, core component of nucleosome. Nucleosomes wrap and compact DNA into chromatin, limiting DNA accessibility to the cellular machineries which require DNA as a template. Histones thereby play a central role in transcription regulation, DNA repair, DNA replication and chromosomal stability. DNA accessibility is regulated via a complex set of post-translational modifications of histones, also called histone code, and nucleosome remodeling. This is Histone H2A from Olisthodiscus luteus (Marine phytoflagellate).